Here is a 199-residue protein sequence, read N- to C-terminus: Recombination protein RecR (199 aa).

The C4-type zinc finger occupies 56–71 (CQVCFHLSAESTCEIC). The Toprim domain occupies 79–173 (QTLCVVADSR…KVTRIAFGLP (95 aa)).

This sequence belongs to the RecR family.

May play a role in DNA repair. It seems to be involved in an RecBC-independent recombinational process of DNA repair. It may act with RecF and RecO. The polypeptide is Recombination protein RecR (Gloeothece citriformis (strain PCC 7424) (Cyanothece sp. (strain PCC 7424))).